Consider the following 81-residue polypeptide: Photosystem I iron-sulfur center (81 aa).

4Fe-4S ferredoxin-type domains follow at residues 2-31 and 39-68; these read SHTVKIYDTCIGCTQCVRACPTDVLEMVPW and IASSPRTEDCVGCKRCETACPTDFLSIRVY. [4Fe-4S] cluster is bound by residues cysteine 11, cysteine 14, cysteine 17, cysteine 21, cysteine 48, cysteine 51, cysteine 54, and cysteine 58.

As to quaternary structure, the cyanobacterial PSI reaction center is composed of one copy each of PsaA,B,C,D,E,F,I,J,K,L,M and X, and forms trimeric complexes. The cofactor is [4Fe-4S] cluster.

The protein localises to the cellular thylakoid membrane. It carries out the reaction reduced [plastocyanin] + hnu + oxidized [2Fe-2S]-[ferredoxin] = oxidized [plastocyanin] + reduced [2Fe-2S]-[ferredoxin]. In terms of biological role, apoprotein for the two 4Fe-4S centers FA and FB of photosystem I (PSI); essential for photochemical activity. FB is the terminal electron acceptor of PSI, donating electrons to ferredoxin. The C-terminus interacts with PsaA/B/D and helps assemble the protein into the PSI complex. Required for binding of PsaD and PsaE to PSI. PSI is a plastocyanin/cytochrome c6-ferredoxin oxidoreductase, converting photonic excitation into a charge separation, which transfers an electron from the donor P700 chlorophyll pair to the spectroscopically characterized acceptors A0, A1, FX, FA and FB in turn. The chain is Photosystem I iron-sulfur center from Microchaete diplosiphon (Fremyella diplosiphon).